The sequence spans 330 residues: Alpha/beta hydrolase domain-containing protein VTE7 (330 aa).

The AB hydrolase-1 domain occupies Val-84–Lys-315. The active-site Nucleophile is the Ser-157. Active-site charge relay system residues include Asp-279 and His-307.

It belongs to the AB hydrolase superfamily.

The protein resides in the plastid. Its subcellular location is the chloroplast envelope. Its function is as follows. Hydrolase involved in tocopherol (vitamin E) biosynthesis. Releases prenyl alcohols from chlorophyll biosynthetic intermediates, which are then converted to the corresponding diphosphates for tocopherol biosynthesis. Provides most of the phytol from chlorophyll for tocopherol biosynthesis in seeds. This Arabidopsis thaliana (Mouse-ear cress) protein is Alpha/beta hydrolase domain-containing protein VTE7.